The sequence spans 366 residues: Chorismate synthase (366 aa).

NADP(+) is bound by residues arginine 48 and arginine 54. Residues 125 to 127, 238 to 239, glycine 278, 293 to 297, and arginine 319 each bind FMN; these read RSS, NA, and KPTSS.

Belongs to the chorismate synthase family. As to quaternary structure, homotetramer. FMNH2 is required as a cofactor.

The catalysed reaction is 5-O-(1-carboxyvinyl)-3-phosphoshikimate = chorismate + phosphate. The protein operates within metabolic intermediate biosynthesis; chorismate biosynthesis; chorismate from D-erythrose 4-phosphate and phosphoenolpyruvate: step 7/7. Catalyzes the anti-1,4-elimination of the C-3 phosphate and the C-6 proR hydrogen from 5-enolpyruvylshikimate-3-phosphate (EPSP) to yield chorismate, which is the branch point compound that serves as the starting substrate for the three terminal pathways of aromatic amino acid biosynthesis. This reaction introduces a second double bond into the aromatic ring system. In Paraburkholderia phymatum (strain DSM 17167 / CIP 108236 / LMG 21445 / STM815) (Burkholderia phymatum), this protein is Chorismate synthase.